Reading from the N-terminus, the 307-residue chain is Elongation factor Ts (307 aa).

The segment at T79–V82 is involved in Mg(2+) ion dislocation from EF-Tu.

This sequence belongs to the EF-Ts family.

Its subcellular location is the cytoplasm. Its function is as follows. Associates with the EF-Tu.GDP complex and induces the exchange of GDP to GTP. It remains bound to the aminoacyl-tRNA.EF-Tu.GTP complex up to the GTP hydrolysis stage on the ribosome. This Bartonella tribocorum (strain CIP 105476 / IBS 506) protein is Elongation factor Ts.